Reading from the N-terminus, the 361-residue chain is Chorismate synthase (361 aa).

NADP(+)-binding residues include arginine 48 and arginine 54. FMN is bound by residues 125–127, 238–239, glycine 278, 293–297, and arginine 319; these read RSS, NA, and KPTSS.

Belongs to the chorismate synthase family. Homotetramer. It depends on FMNH2 as a cofactor.

It catalyses the reaction 5-O-(1-carboxyvinyl)-3-phosphoshikimate = chorismate + phosphate. Its pathway is metabolic intermediate biosynthesis; chorismate biosynthesis; chorismate from D-erythrose 4-phosphate and phosphoenolpyruvate: step 7/7. In terms of biological role, catalyzes the anti-1,4-elimination of the C-3 phosphate and the C-6 proR hydrogen from 5-enolpyruvylshikimate-3-phosphate (EPSP) to yield chorismate, which is the branch point compound that serves as the starting substrate for the three terminal pathways of aromatic amino acid biosynthesis. This reaction introduces a second double bond into the aromatic ring system. This is Chorismate synthase from Pectobacterium atrosepticum (strain SCRI 1043 / ATCC BAA-672) (Erwinia carotovora subsp. atroseptica).